Reading from the N-terminus, the 88-residue chain is MANIKQQKKRNKTNEKRRLRNISFKSATKTIVKQVKIAVEQADKAKALANLSLAYQKLDKGASKKIYHANFVNRNKANLQKLVNTILS.

The disordered stretch occupies residues 1–20; the sequence is MANIKQQKKRNKTNEKRRLR.

Belongs to the bacterial ribosomal protein bS20 family.

Functionally, binds directly to 16S ribosomal RNA. The chain is Small ribosomal subunit protein bS20 from Phytoplasma australiense.